The following is a 330-amino-acid chain: HPr kinase/phosphorylase (330 aa).

Residues histidine 153 and lysine 174 contribute to the active site. 168 to 175 (GKSGLGKS) contacts ATP. Serine 175 lines the Mg(2+) pocket. The active-site Proton acceptor; for phosphorylation activity. Proton donor; for dephosphorylation activity is the aspartate 192. Positions 217 to 226 (MEIRGLGVVD) are important for the catalytic mechanism of both phosphorylation and dephosphorylation. A Mg(2+)-binding site is contributed by glutamate 218. Arginine 259 is an active-site residue. The segment at 280 to 285 (PIFPGK) is important for the catalytic mechanism of dephosphorylation.

The protein belongs to the HPrK/P family. In terms of assembly, homohexamer. Requires Mg(2+) as cofactor.

The enzyme catalyses [HPr protein]-L-serine + ATP = [HPr protein]-O-phospho-L-serine + ADP + H(+). It catalyses the reaction [HPr protein]-O-phospho-L-serine + phosphate + H(+) = [HPr protein]-L-serine + diphosphate. Catalyzes the ATP- as well as the pyrophosphate-dependent phosphorylation of a specific serine residue in HPr, a phosphocarrier protein of the phosphoenolpyruvate-dependent sugar phosphotransferase system (PTS). HprK/P also catalyzes the pyrophosphate-producing, inorganic phosphate-dependent dephosphorylation (phosphorolysis) of seryl-phosphorylated HPr (P-Ser-HPr). The polypeptide is HPr kinase/phosphorylase (Chlorobium limicola (strain DSM 245 / NBRC 103803 / 6330)).